The chain runs to 309 residues: Methyltransferase AacuQ (309 aa).

Residues 57-149 (DVGAGNGPYA…QLRPGGTFAC (93 aa)) are methyltransferase domain.

It belongs to the methyltransferase superfamily.

The protein operates within secondary metabolite biosynthesis. Functionally, methyltransferase; part of the gene cluster that mediates the biosynthesis of the tetrahydroxanthone dimer secalonic acid D. The pathway begins with the synthesis of atrochrysone thioester by the polyketide synthase AacuL. The atrochrysone carboxyl ACP thioesterase AacuM then breaks the thioester bond and releases the atrochrysone carboxylic acid from AacuL. Atrochrysone carboxylic acid is decarboxylated by the decarboxylase AacuI, and oxidized by the anthrone oxygenase AacuG to yield emodin. Emodin is then reduced to emodin hydroquinone by a yet unidentified oxidoreductase. A-ring reduction by the short chain dehydrogenase AacuN, dehydration by the scytalone dehydratase-like protein AacuK and probable spontaneous re-oxidation, results in overall deoxygenation to chrysophanol. Baeyer-Villiger oxidation by the Baeyer-Villiger monooxygenase (BVMO) AacuH then yields monodictyphenone. Monodictyphenone is transformed into compounds with the tetrahydroxanthone skeleton via methylesterification by the methyltransferase AacuQ, followed by the action of the flavin-dependent monooxygenase AacuC, the isomerase AacuP, and the short chain dehydrogenase/reductase AacuF or AacuD. AacuF and AacuD should accept the same compound as a substrate but perform the ketoreduction with a different stereoselectivity, thus yielding blennolides B and A, respectively. In the final step of the biosynthesis, the cytochrome P450 monooxygenase AacuE accepts blennolide B and/or blennolide A to conduct the dimerization reaction to furnish the tetrahydroxanthone dimers, secalonic acids D, B, and F. In Aspergillus aculeatus (strain ATCC 16872 / CBS 172.66 / WB 5094), this protein is Methyltransferase AacuQ.